We begin with the raw amino-acid sequence, 377 residues long: Alanine racemase (377 aa).

Lys37 acts as the Proton acceptor; specific for D-alanine in catalysis. At Lys37 the chain carries N6-(pyridoxal phosphate)lysine. Arg135 contacts substrate. Tyr271 serves as the catalytic Proton acceptor; specific for L-alanine. Met319 contributes to the substrate binding site.

Belongs to the alanine racemase family. Pyridoxal 5'-phosphate is required as a cofactor.

It carries out the reaction L-alanine = D-alanine. Its pathway is amino-acid biosynthesis; D-alanine biosynthesis; D-alanine from L-alanine: step 1/1. Catalyzes the interconversion of L-alanine and D-alanine. May also act on other amino acids. The protein is Alanine racemase (alr) of Helicobacter pylori (strain G27).